A 673-amino-acid polypeptide reads, in one-letter code: DNA ligase (673 aa).

NAD(+) contacts are provided by residues 33-37 (DYEYD), 82-83 (SL), and Glu-113. The N6-AMP-lysine intermediate role is filled by Lys-115. The NAD(+) site is built by Arg-136, Glu-170, Lys-285, and Lys-309. Positions 403, 406, 421, and 426 each coordinate Zn(2+). The BRCT domain occupies 583-672 (AKSDILKGYT…SHEEVEKILM (90 aa)).

It belongs to the NAD-dependent DNA ligase family. LigA subfamily. The cofactor is Mg(2+). Mn(2+) serves as cofactor.

It carries out the reaction NAD(+) + (deoxyribonucleotide)n-3'-hydroxyl + 5'-phospho-(deoxyribonucleotide)m = (deoxyribonucleotide)n+m + AMP + beta-nicotinamide D-nucleotide.. Its function is as follows. DNA ligase that catalyzes the formation of phosphodiester linkages between 5'-phosphoryl and 3'-hydroxyl groups in double-stranded DNA using NAD as a coenzyme and as the energy source for the reaction. It is essential for DNA replication and repair of damaged DNA. This Caldicellulosiruptor saccharolyticus (strain ATCC 43494 / DSM 8903 / Tp8T 6331) protein is DNA ligase.